Reading from the N-terminus, the 137-residue chain is MSARTKARKRALDVLYVADIRGESIPATLAVEQQRAAAEPDRQASWQYAREIAEGFVAHQDEIDELIETYSVNWTLARMPAVDRAILRIGIWEILFNADVPHGVAISESVDLASSLSTDESASFVNGMLARIAATQA.

Belongs to the NusB family.

In terms of biological role, involved in transcription antitermination. Required for transcription of ribosomal RNA (rRNA) genes. Binds specifically to the boxA antiterminator sequence of the ribosomal RNA (rrn) operons. This is Transcription antitermination protein NusB from Clavibacter michiganensis subsp. michiganensis (strain NCPPB 382).